Consider the following 375-residue polypeptide: Chaperone protein DnaJ (375 aa).

The region spanning 5–70 (DYYEILGVSK…QKRAAYDQYG (66 aa)) is the J domain. The segment at 130 to 208 (GVTKEIRIPT…CHGHGRVEKS (79 aa)) adopts a CR-type zinc-finger fold. The Zn(2+) site is built by Cys143, Cys146, Cys160, Cys163, Cys182, Cys185, Cys196, and Cys199. CXXCXGXG motif repeat units follow at residues 143-150 (CDVCHGSG), 160-167 (CPTCHGSG), 182-189 (CPHCQGRG), and 196-203 (CHKCHGHG).

It belongs to the DnaJ family. In terms of assembly, homodimer. Requires Zn(2+) as cofactor.

The protein localises to the cytoplasm. Its function is as follows. Participates actively in the response to hyperosmotic and heat shock by preventing the aggregation of stress-denatured proteins and by disaggregating proteins, also in an autonomous, DnaK-independent fashion. Unfolded proteins bind initially to DnaJ; upon interaction with the DnaJ-bound protein, DnaK hydrolyzes its bound ATP, resulting in the formation of a stable complex. GrpE releases ADP from DnaK; ATP binding to DnaK triggers the release of the substrate protein, thus completing the reaction cycle. Several rounds of ATP-dependent interactions between DnaJ, DnaK and GrpE are required for fully efficient folding. Also involved, together with DnaK and GrpE, in the DNA replication of plasmids through activation of initiation proteins. The chain is Chaperone protein DnaJ from Salmonella paratyphi A (strain ATCC 9150 / SARB42).